Reading from the N-terminus, the 248-residue chain is Glucosamine-6-phosphate isomerase (248 aa).

Asp-68 (proton acceptor; for enolization step) is an active-site residue. Catalysis depends on Glu-137, which acts as the For ring-opening step. His-139 serves as the catalytic Proton acceptor; for ring-opening step. Glu-144 (for ring-opening step) is an active-site residue.

The protein belongs to the glucosamine/galactosamine-6-phosphate isomerase family. As to quaternary structure, monomer.

It carries out the reaction alpha-D-glucosamine 6-phosphate + H2O = beta-D-fructose 6-phosphate + NH4(+). In Candida albicans (strain SC5314 / ATCC MYA-2876) (Yeast), this protein is Glucosamine-6-phosphate isomerase (NAG1).